A 208-amino-acid chain; its full sequence is Probable GTP-binding protein EngB (208 aa).

The EngB-type G domain maps to 23 to 205 (LTSEMVILGR…RQTLLKYLLT (183 aa)). Residues 31 to 38 (GRSNVGKS), 57 to 61 (GKTRL), 84 to 87 (DLPG), 154 to 157 (TKFD), and 182 to 184 (FNA) contribute to the GTP site. Mg(2+) contacts are provided by Ser38 and Thr59.

The protein belongs to the TRAFAC class TrmE-Era-EngA-EngB-Septin-like GTPase superfamily. EngB GTPase family. It depends on Mg(2+) as a cofactor.

In terms of biological role, necessary for normal cell division and for the maintenance of normal septation. This is Probable GTP-binding protein EngB from Helicobacter pylori (strain J99 / ATCC 700824) (Campylobacter pylori J99).